A 465-amino-acid polypeptide reads, in one-letter code: Azaphilone cluster-specific transcription factor azaR (465 aa).

Residues 1–16 (MSDSRTTTTKNNTTNH) show a composition bias toward low complexity. The segment at 1–25 (MSDSRTTTTKNNTTNHKTSRQGPGS) is disordered. Positions 27–53 (CEECRRRKLRCDRQPQCQNCVDAGVYC) form a DNA-binding region, zn(2)-C6 fungal-type.

The protein localises to the nucleus. Transcription factor that regulates the expression of the gene cluster that mediates the biosynthesis of azaphilones, a class of fungal metabolites characterized by a highly oxygenated pyrano-quinone bicyclic core and exhibiting a broad range of bioactivities. This is Azaphilone cluster-specific transcription factor azaR from Aspergillus niger (strain ATCC 1015 / CBS 113.46 / FGSC A1144 / LSHB Ac4 / NCTC 3858a / NRRL 328 / USDA 3528.7).